Here is a 334-residue protein sequence, read N- to C-terminus: Ornithine carbamoyltransferase (334 aa).

Residues 57 to 60 (STRT), Q84, R108, and 135 to 138 (HPTQ) contribute to the carbamoyl phosphate site. L-ornithine is bound by residues N169, D233, and 237-238 (SM). Carbamoyl phosphate contacts are provided by residues 275 to 276 (CL) and R320.

The protein belongs to the aspartate/ornithine carbamoyltransferase superfamily. OTCase family.

The protein localises to the cytoplasm. The enzyme catalyses carbamoyl phosphate + L-ornithine = L-citrulline + phosphate + H(+). The protein operates within amino-acid biosynthesis; L-arginine biosynthesis; L-arginine from L-ornithine and carbamoyl phosphate: step 1/3. Reversibly catalyzes the transfer of the carbamoyl group from carbamoyl phosphate (CP) to the N(epsilon) atom of ornithine (ORN) to produce L-citrulline. This Pasteurella multocida (strain Pm70) protein is Ornithine carbamoyltransferase (argF).